An 89-amino-acid polypeptide reads, in one-letter code: Putative membrane protein insertion efficiency factor (89 aa).

Residues 68 to 89 (VPPPNSDARNAPHEAEASSHRL) form a disordered region. Positions 77 to 89 (NAPHEAEASSHRL) are enriched in basic and acidic residues.

It belongs to the UPF0161 family.

It localises to the cell inner membrane. Could be involved in insertion of integral membrane proteins into the membrane. The chain is Putative membrane protein insertion efficiency factor from Burkholderia thailandensis (strain ATCC 700388 / DSM 13276 / CCUG 48851 / CIP 106301 / E264).